The primary structure comprises 97 residues: UPF0213 protein BLi00048/BL00536 (97 aa).

Positions 4-79 (NSHYFYVLSC…KKLSRKNKER (76 aa)) constitute a GIY-YIG domain.

It belongs to the UPF0213 family.

The chain is UPF0213 protein BLi00048/BL00536 from Bacillus licheniformis (strain ATCC 14580 / DSM 13 / JCM 2505 / CCUG 7422 / NBRC 12200 / NCIMB 9375 / NCTC 10341 / NRRL NRS-1264 / Gibson 46).